A 137-amino-acid chain; its full sequence is Large ribosomal subunit protein uL16c (137 aa).

This sequence belongs to the universal ribosomal protein uL16 family. In terms of assembly, part of the 50S ribosomal subunit.

It is found in the plastid. It localises to the chloroplast. In Thalassiosira pseudonana (Marine diatom), this protein is Large ribosomal subunit protein uL16c.